Here is a 189-residue protein sequence, read N- to C-terminus: Stathmin-4 (189 aa).

2 S-palmitoyl cysteine lipidation sites follow: C20 and C22. Residues 48–189 (SDMEVIELNK…NKELKEEASR (142 aa)) form the SLD domain. At S90 the chain carries Phosphoserine. The stretch at 90 to 188 (SLEEIQKKLE…KNKELKEEAS (99 aa)) forms a coiled coil. Positions 168–189 (QEKDKHAEEVRKNKELKEEASR) are disordered.

It belongs to the stathmin family.

The protein localises to the golgi apparatus. It is found in the cell projection. The protein resides in the growth cone. Its subcellular location is the axon. Exhibits microtubule-destabilizing activity. The chain is Stathmin-4 (STMN4) from Homo sapiens (Human).